The chain runs to 537 residues: Zinc finger protein 835 (537 aa).

Positions 12 to 109 are disordered; sequence AELEGNWKHE…RERGGGPKKP (98 aa). Residues 63–77 are compositionally biased toward polar residues; sequence TISSPAATQASVPDD. Over residues 89–104 the composition is skewed to basic and acidic residues; it reads SPKERHPDSRQRERGG. C2H2-type zinc fingers lie at residues 110–132, 138–160, 166–188, 194–216, 222–244, 250–272, 278–300, 306–328, 334–356, 362–384, 390–412, 418–440, 446–468, and 474–496; these read WKCG…QRIH, FACP…QRTH, YACH…WRTH, HRCA…RRVH, YACA…QRIH, YECS…QRIH, YRCG…RRVH, YTCQ…RRIH, YACG…QRTH, YPCH…RLVH, YRCL…QKIH, YKCG…QRTH, YTCP…HIVH, and YECS…QRTH. The tract at residues 497–537 is disordered; that stretch reads ADSSGRLCPAPTPDSTPGLSQGGETCQQGCPGRNPRGPAED. The span at 509–524 shows a compositional bias: polar residues; that stretch reads PDSTPGLSQGGETCQQ.

This sequence belongs to the krueppel C2H2-type zinc-finger protein family.

It is found in the nucleus. May be involved in transcriptional regulation. The protein is Zinc finger protein 835 (ZNF835) of Homo sapiens (Human).